The primary structure comprises 357 residues: O-methyltransferase 1, chloroplastic (357 aa).

The transit peptide at 1–53 (MPVLPWLAAAATTPVRRSPPLPATPRALLRLPASSFPPWSNCAKSGLPPRGPF) directs the protein to the chloroplast. The tract at residues 50–71 (RGPFATAADTPLGGSLPEPEEE) is disordered.

The protein belongs to the methyltransferase superfamily. LCMT family. Expressed in roots, leaf sheaths, flag leaves and panicles.

The protein resides in the plastid. It localises to the chloroplast. It catalyses the reaction N-acetylserotonin + S-adenosyl-L-methionine = melatonin + S-adenosyl-L-homocysteine + H(+). It participates in aromatic compound metabolism; melatonin biosynthesis; melatonin from serotonin: step 1/2. In terms of biological role, involved in melatonin biosynthesis. Can function as acetylserotonin O-methyltransferase. Catalyzes the transfer of a methyl group onto N-acetylserotonin, producing melatonin (N-acetyl-5-methoxytryptamine). Involved in the regulation of jasmonate- and brassinosteroid-mediated plant growth and defense responses. In Oryza sativa subsp. japonica (Rice), this protein is O-methyltransferase 1, chloroplastic.